We begin with the raw amino-acid sequence, 119 residues long: Large ribosomal subunit protein bL20 (119 aa).

It belongs to the bacterial ribosomal protein bL20 family.

Its function is as follows. Binds directly to 23S ribosomal RNA and is necessary for the in vitro assembly process of the 50S ribosomal subunit. It is not involved in the protein synthesizing functions of that subunit. This is Large ribosomal subunit protein bL20 from Nitrobacter winogradskyi (strain ATCC 25391 / DSM 10237 / CIP 104748 / NCIMB 11846 / Nb-255).